Consider the following 491-residue polypeptide: Ketol-acid reductoisomerase (NADP(+)) (491 aa).

The 194-residue stretch at 15-208 folds into the KARI N-terminal Rossmann domain; it reads AQLGKCRFMG…GGHRAGVLES (194 aa). Residues 45 to 48, R68, R76, S78, and 108 to 110 contribute to the NADP(+) site; these read CGAQ and DKQ. H132 is a catalytic residue. Residue G158 coordinates NADP(+). KARI C-terminal knotted domains are found at residues 209–344 and 345–484; these read SFVA…TAPQ and YEGK…MTDM. Mg(2+) contacts are provided by D217, E221, E389, and E393. S414 contributes to the substrate binding site.

It belongs to the ketol-acid reductoisomerase family. The cofactor is Mg(2+).

It carries out the reaction (2R)-2,3-dihydroxy-3-methylbutanoate + NADP(+) = (2S)-2-acetolactate + NADPH + H(+). It catalyses the reaction (2R,3R)-2,3-dihydroxy-3-methylpentanoate + NADP(+) = (S)-2-ethyl-2-hydroxy-3-oxobutanoate + NADPH + H(+). It participates in amino-acid biosynthesis; L-isoleucine biosynthesis; L-isoleucine from 2-oxobutanoate: step 2/4. Its pathway is amino-acid biosynthesis; L-valine biosynthesis; L-valine from pyruvate: step 2/4. In terms of biological role, involved in the biosynthesis of branched-chain amino acids (BCAA). Catalyzes an alkyl-migration followed by a ketol-acid reduction of (S)-2-acetolactate (S2AL) to yield (R)-2,3-dihydroxy-isovalerate. In the isomerase reaction, S2AL is rearranged via a Mg-dependent methyl migration to produce 3-hydroxy-3-methyl-2-ketobutyrate (HMKB). In the reductase reaction, this 2-ketoacid undergoes a metal-dependent reduction by NADPH to yield (R)-2,3-dihydroxy-isovalerate. The polypeptide is Ketol-acid reductoisomerase (NADP(+)) (Escherichia coli O6:K15:H31 (strain 536 / UPEC)).